Reading from the N-terminus, the 252-residue chain is Transcriptional regulatory protein HptR (252 aa).

A Response regulatory domain is found at 3–118 (KVVICDDERI…QLEVILGRLV (116 aa)). D55 is subject to 4-aspartylphosphate. In terms of domain architecture, HTH araC/xylS-type spans 153–250 (NQIVDQIKQS…QMSPSDYCKQ (98 aa)). 2 consecutive DNA-binding regions (H-T-H motif) follow at residues 170 to 191 (SDLIQHIDVSESYAMRTFKDHV) and 217 to 240 (HYEIADKVGFSEYKMFSYHFKKYL).

Post-translationally, phosphorylated by HptS.

It localises to the cytoplasm. Member of the two-component regulatory system HptS/HptR that regulates genes involved in hexose phosphate transport system in response to changes in extracellular phosphate sources. Activates uhpT expression to facilitate glucose-6-phosphate/G6P utilization by directly binding to its promoter. Antagonizes CcpA-dependent transcription of a subset of CcpA-regulated genes involved in antibiotic susceptibility. This Staphylococcus aureus (strain MRSA252) protein is Transcriptional regulatory protein HptR (hptR).